The sequence spans 225 residues: CRISPR pre-crRNA endoribonuclease Cas5d (225 aa).

Belongs to the CRISPR-associated protein Cas5 family. Subtype I-C/Dvulg subfamily. Requires Does not require a metal cofactor. as cofactor.

CRISPR (clustered regularly interspaced short palindromic repeat) is an adaptive immune system that provides protection against mobile genetic elements (viruses, transposable elements and conjugative plasmids). CRISPR clusters contain spacers, sequences complementary to antecedent mobile elements, and target invading nucleic acids. CRISPR clusters are transcribed and processed into CRISPR RNA (crRNA). This protein is a sequence-specific endonuclease that cleaves pre-crRNA at G21 into mature crRNA. Does not cleave pre-crRNA associated with the T.thermophilus strain HB27 Cas5 protein (AC Q746C2) CRISPR locus. The reaction mechanism may proceed by an intramolecular attack of the 2'-hydroxyl group of G21 on the scissile phosphodiester, cutting the precursor 3' to G21 residue yielding 5'-hydroxyl and 2' and/or 3' ends lacking a hydroxyl group (perhaps a 2'/3' cyclic phosphodiester). The polypeptide is CRISPR pre-crRNA endoribonuclease Cas5d (Mannheimia succiniciproducens (strain KCTC 0769BP / MBEL55E)).